The sequence spans 611 residues: Dihydroxy-acid dehydratase (611 aa).

D81 provides a ligand contact to Mg(2+). A [2Fe-2S] cluster-binding site is contributed by C122. Residues D123 and K124 each contribute to the Mg(2+) site. K124 carries the N6-carboxylysine modification. Residue C195 participates in [2Fe-2S] cluster binding. E491 contributes to the Mg(2+) binding site. S517 functions as the Proton acceptor in the catalytic mechanism.

This sequence belongs to the IlvD/Edd family. In terms of assembly, homodimer. It depends on [2Fe-2S] cluster as a cofactor. Mg(2+) serves as cofactor.

It carries out the reaction (2R)-2,3-dihydroxy-3-methylbutanoate = 3-methyl-2-oxobutanoate + H2O. It catalyses the reaction (2R,3R)-2,3-dihydroxy-3-methylpentanoate = (S)-3-methyl-2-oxopentanoate + H2O. Its pathway is amino-acid biosynthesis; L-isoleucine biosynthesis; L-isoleucine from 2-oxobutanoate: step 3/4. It participates in amino-acid biosynthesis; L-valine biosynthesis; L-valine from pyruvate: step 3/4. In terms of biological role, functions in the biosynthesis of branched-chain amino acids. Catalyzes the dehydration of (2R,3R)-2,3-dihydroxy-3-methylpentanoate (2,3-dihydroxy-3-methylvalerate) into 2-oxo-3-methylpentanoate (2-oxo-3-methylvalerate) and of (2R)-2,3-dihydroxy-3-methylbutanoate (2,3-dihydroxyisovalerate) into 2-oxo-3-methylbutanoate (2-oxoisovalerate), the penultimate precursor to L-isoleucine and L-valine, respectively. This chain is Dihydroxy-acid dehydratase, found in Brucella abortus (strain S19).